We begin with the raw amino-acid sequence, 641 residues long: Chaperone protein HtpG (641 aa).

The tract at residues 1–351 (MTQSVHAETH…SNDLPLNVSR (351 aa)) is a; substrate-binding. A b region spans residues 352-568 (EILQDNKVTV…AHGMSTQMIK (217 aa)). A c region spans residues 569–641 (LMRAAGQPVP…SRINRLLLQA (73 aa)).

This sequence belongs to the heat shock protein 90 family. As to quaternary structure, homodimer.

It is found in the cytoplasm. Its function is as follows. Molecular chaperone. Has ATPase activity. This is Chaperone protein HtpG from Aeromonas hydrophila subsp. hydrophila (strain ATCC 7966 / DSM 30187 / BCRC 13018 / CCUG 14551 / JCM 1027 / KCTC 2358 / NCIMB 9240 / NCTC 8049).